The primary structure comprises 1938 residues: Myosin-4 (1938 aa).

The region spanning 33–82 is the Myosin N-terminal SH3-like domain; the sequence is DAKSSVFVADPKESFVKATVQSREGGKVTAKTEAGATVTVKEDQVFPMNP. Serine 36 carries the post-translational modification Phosphoserine. 2 positions are modified to phosphothreonine: threonine 64 and threonine 69. Residues 86–781 form the Myosin motor domain; it reads DKIEDMAMMT…LLGLLEEMRD (696 aa). 179 to 186 lines the ATP pocket; sequence GESGAGKT. A Phosphotyrosine modification is found at tyrosine 389. Serine 392 is modified (phosphoserine). Threonine 419 is subject to Phosphothreonine. Tyrosine 424 bears the Phosphotyrosine mark. The actin-binding stretch occupies residues 658 to 680; sequence LNKLMTNLRSTHPHFVRCIIPNE. The residue at position 756 (histidine 756) is a Pros-methylhistidine. The segment at 760–774 is actin-binding; that stretch reads KFGHTKVFFKAGLLG. The IQ domain maps to 784–813; it reads LAQLITRTQAMCRGFLARVEYKKMVERRES. The stretch at 845 to 1926 forms a coiled coil; the sequence is SAETEKEMAN…ESQVNKLRVK (1082 aa). A phosphoserine mark is found at serine 1091, serine 1095, serine 1161, and serine 1236. Threonine 1240 bears the Phosphothreonine mark. The residue at position 1242 (serine 1242) is a Phosphoserine. Threonine 1254 carries the post-translational modification Phosphothreonine. Phosphoserine is present on serine 1260. Threonine 1264 bears the Phosphothreonine mark. Residue serine 1277 is modified to Phosphoserine. Threonine 1285 carries the post-translational modification Phosphothreonine. Phosphoserine occurs at positions 1287, 1291, 1302, and 1305. The residue at position 1463 (tyrosine 1463) is a Phosphotyrosine. A Phosphothreonine modification is found at threonine 1466. Serine 1473 carries the phosphoserine modification. Phosphotyrosine is present on tyrosine 1491. At serine 1494 the chain carries Phosphoserine. Phosphothreonine is present on threonine 1500. Serine 1513 is subject to Phosphoserine. Threonine 1516 carries the post-translational modification Phosphothreonine. 7 positions are modified to phosphoserine: serine 1541, serine 1553, serine 1573, serine 1599, serine 1602, serine 1713, and serine 1725. Phosphothreonine occurs at positions 1729 and 1735. Residue serine 1738 is modified to Phosphoserine.

Belongs to the TRAFAC class myosin-kinesin ATPase superfamily. Myosin family. In terms of assembly, muscle myosin is a hexameric protein that consists of 2 heavy chain subunits (MHC), 2 alkali light chain subunits (MLC) and 2 regulatory light chain subunits (MLC-2).

The protein resides in the cytoplasm. The protein localises to the myofibril. Functionally, muscle contraction. This chain is Myosin-4 (MYH4), found in Oryctolagus cuniculus (Rabbit).